The following is a 675-amino-acid chain: Methionine--tRNA ligase (675 aa).

The 'HIGH' region signature appears at 15–25 (PYANGSIHLGH). The Zn(2+) site is built by Cys146, Cys149, Cys159, and Cys162. The short motif at 332 to 336 (KMSKS) is the 'KMSKS' region element. Lys335 contributes to the ATP binding site. The 103-residue stretch at 573-675 (DFAKVDMRIA…SGAQPGMQVK (103 aa)) folds into the tRNA-binding domain.

This sequence belongs to the class-I aminoacyl-tRNA synthetase family. MetG type 1 subfamily. Homodimer. Requires Zn(2+) as cofactor.

The protein localises to the cytoplasm. It catalyses the reaction tRNA(Met) + L-methionine + ATP = L-methionyl-tRNA(Met) + AMP + diphosphate. Functionally, is required not only for elongation of protein synthesis but also for the initiation of all mRNA translation through initiator tRNA(fMet) aminoacylation. This is Methionine--tRNA ligase from Yersinia pseudotuberculosis serotype I (strain IP32953).